A 466-amino-acid polypeptide reads, in one-letter code: Replication termination factor 1 (466 aa).

DNA-binding domain regions lie at residues 94-249 and 250-421; these read RDYT…LRRK and YNPF…KKTL. 2 HTH myb-type domains span residues 251–304 and 305–363; these read NPFK…QPGE and INRS…SRDI. 2 consecutive DNA-binding regions (H-T-H motif) follow at residues 278 to 300 and 336 to 359; these read WSLI…RDYI and WSLI…YTLI.

The protein localises to the nucleus. Mediates site-specific replication termination at the polar replication barrier RTS1, a barrier which ensures that replication of the mat1 locus in S.pombe occurs in the centromere-proximal direction. The sequence is that of Replication termination factor 1 (rtf1) from Schizosaccharomyces pombe (strain 972 / ATCC 24843) (Fission yeast).